The sequence spans 264 residues: 3-methyl-2-oxobutanoate hydroxymethyltransferase (264 aa).

2 residues coordinate Mg(2+): Asp-45 and Asp-84. 3-methyl-2-oxobutanoate contacts are provided by residues 45–46 (DS), Asp-84, and Lys-112. A Mg(2+)-binding site is contributed by Glu-114. Catalysis depends on Glu-181, which acts as the Proton acceptor.

Belongs to the PanB family. As to quaternary structure, homodecamer; pentamer of dimers. Requires Mg(2+) as cofactor.

It is found in the cytoplasm. The enzyme catalyses 3-methyl-2-oxobutanoate + (6R)-5,10-methylene-5,6,7,8-tetrahydrofolate + H2O = 2-dehydropantoate + (6S)-5,6,7,8-tetrahydrofolate. Its pathway is cofactor biosynthesis; (R)-pantothenate biosynthesis; (R)-pantoate from 3-methyl-2-oxobutanoate: step 1/2. Its function is as follows. Catalyzes the reversible reaction in which hydroxymethyl group from 5,10-methylenetetrahydrofolate is transferred onto alpha-ketoisovalerate to form ketopantoate. This Escherichia fergusonii (strain ATCC 35469 / DSM 13698 / CCUG 18766 / IAM 14443 / JCM 21226 / LMG 7866 / NBRC 102419 / NCTC 12128 / CDC 0568-73) protein is 3-methyl-2-oxobutanoate hydroxymethyltransferase.